The sequence spans 328 residues: Nickel import system permease protein NikB (328 aa).

Helical transmembrane passes span 11 to 31 (LMQM…LMKL), 104 to 124 (LLIS…LGII), 139 to 159 (VIST…LLFI), 170 to 190 (ILSQ…AYII), 229 to 249 (ILPI…GTVV), and 279 to 299 (VLFI…LTLL). The 198-residue stretch at 100-297 (APITLLISFS…IINTIADLLT (198 aa)) folds into the ABC transmembrane type-1 domain.

The protein belongs to the binding-protein-dependent transport system permease family. OppBC subfamily. In terms of assembly, the complex is composed of two ATP-binding proteins (NikD and NikE), two transmembrane proteins (NikB and NikC) and a solute-binding protein (NikA).

It is found in the cell membrane. Functionally, part of the ABC transporter complex NikABCDE (Opp2) involved in nickel import. Probably responsible for the translocation of the substrate across the membrane. The chain is Nickel import system permease protein NikB from Staphylococcus aureus (strain Mu50 / ATCC 700699).